Here is a 341-residue protein sequence, read N- to C-terminus: S-adenosylmethionine:tRNA ribosyltransferase-isomerase (341 aa).

The protein belongs to the QueA family. Monomer.

It is found in the cytoplasm. It catalyses the reaction 7-aminomethyl-7-carbaguanosine(34) in tRNA + S-adenosyl-L-methionine = epoxyqueuosine(34) in tRNA + adenine + L-methionine + 2 H(+). It participates in tRNA modification; tRNA-queuosine biosynthesis. Transfers and isomerizes the ribose moiety from AdoMet to the 7-aminomethyl group of 7-deazaguanine (preQ1-tRNA) to give epoxyqueuosine (oQ-tRNA). The chain is S-adenosylmethionine:tRNA ribosyltransferase-isomerase from Clostridium botulinum (strain Kyoto / Type A2).